A 104-amino-acid polypeptide reads, in one-letter code: UPF0473 protein LGAS_0424 (104 aa).

The protein belongs to the UPF0473 family.

The chain is UPF0473 protein LGAS_0424 from Lactobacillus gasseri (strain ATCC 33323 / DSM 20243 / BCRC 14619 / CIP 102991 / JCM 1131 / KCTC 3163 / NCIMB 11718 / NCTC 13722 / AM63).